A 505-amino-acid chain; its full sequence is Histidine ammonia-lyase (505 aa).

The 5-imidazolinone (Ala-Gly) cross-link spans Ala-141–Gly-143. Residue Ser-142 is modified to 2,3-didehydroalanine (Ser).

It belongs to the PAL/histidase family. Post-translationally, contains an active site 4-methylidene-imidazol-5-one (MIO), which is formed autocatalytically by cyclization and dehydration of residues Ala-Ser-Gly.

The protein localises to the cytoplasm. The enzyme catalyses L-histidine = trans-urocanate + NH4(+). It participates in amino-acid degradation; L-histidine degradation into L-glutamate; N-formimidoyl-L-glutamate from L-histidine: step 1/3. In Bacillus cereus (strain ATCC 10987 / NRS 248), this protein is Histidine ammonia-lyase.